A 177-amino-acid polypeptide reads, in one-letter code: Large ribosomal subunit protein uL6 (177 aa).

It belongs to the universal ribosomal protein uL6 family. Part of the 50S ribosomal subunit.

Functionally, this protein binds to the 23S rRNA, and is important in its secondary structure. It is located near the subunit interface in the base of the L7/L12 stalk, and near the tRNA binding site of the peptidyltransferase center. In Novosphingobium aromaticivorans (strain ATCC 700278 / DSM 12444 / CCUG 56034 / CIP 105152 / NBRC 16084 / F199), this protein is Large ribosomal subunit protein uL6.